We begin with the raw amino-acid sequence, 115 residues long: Ubiquitin-related modifier 1 (115 aa).

At G115 the chain carries 1-thioglycine. Residue G115 forms a Glycyl lysine isopeptide (Gly-Lys) (interchain with K-? in acceptor proteins) linkage.

It belongs to the URM1 family. In terms of processing, C-terminal thiocarboxylation occurs in 2 steps, it is first acyl-adenylated (-COAMP) via the hesA/moeB/thiF part of UBA4, then thiocarboxylated (-COSH) via the rhodanese domain of UBA4.

The protein localises to the cytoplasm. Its pathway is tRNA modification; 5-methoxycarbonylmethyl-2-thiouridine-tRNA biosynthesis. Its function is as follows. Acts as a sulfur carrier required for 2-thiolation of mcm(5)S(2)U at tRNA wobble positions of cytosolic tRNA(Lys), tRNA(Glu) and tRNA(Gln). Serves as sulfur donor in tRNA 2-thiolation reaction by being thiocarboxylated (-COSH) at its C-terminus by the MOCS3 homolog UBA4. The sulfur is then transferred to tRNA to form 2-thiolation of mcm(5)S(2)U. Prior mcm(5) tRNA modification by the elongator complex is required for 2-thiolation. Also acts as a ubiquitin-like protein (UBL) that is covalently conjugated via an isopeptide bond to lysine residues of target proteins such as AHP1. The thiocarboxylated form serves as substrate for conjugation and oxidative stress specifically induces the formation of UBL-protein conjugates. The polypeptide is Ubiquitin-related modifier 1 (Coccidioides immitis (strain RS) (Valley fever fungus)).